Consider the following 162-residue polypeptide: MVKIIGLDPGISKTGWAIISLNEKNNIEFLGGGTISTDGKLGTGERLHIIFEQLKKVISLYSPNEAAVEKIFVNKNPKSSLTLGYARGVVILALKITKLTMNEYDANYVKKSITGNGHADKDQIIFMVKQIVKNLSIKCHHVADALAVAICHAYTKGSCFVE.

Catalysis depends on residues Asp-8, Glu-69, and His-141. 3 residues coordinate Mg(2+): Asp-8, Glu-69, and His-141.

This sequence belongs to the RuvC family. As to quaternary structure, homodimer which binds Holliday junction (HJ) DNA. The HJ becomes 2-fold symmetrical on binding to RuvC with unstacked arms; it has a different conformation from HJ DNA in complex with RuvA. In the full resolvosome a probable DNA-RuvA(4)-RuvB(12)-RuvC(2) complex forms which resolves the HJ. It depends on Mg(2+) as a cofactor.

Its subcellular location is the cytoplasm. It carries out the reaction Endonucleolytic cleavage at a junction such as a reciprocal single-stranded crossover between two homologous DNA duplexes (Holliday junction).. The RuvA-RuvB-RuvC complex processes Holliday junction (HJ) DNA during genetic recombination and DNA repair. Endonuclease that resolves HJ intermediates. Cleaves cruciform DNA by making single-stranded nicks across the HJ at symmetrical positions within the homologous arms, yielding a 5'-phosphate and a 3'-hydroxyl group; requires a central core of homology in the junction. The consensus cleavage sequence is 5'-(A/T)TT(C/G)-3'. Cleavage occurs on the 3'-side of the TT dinucleotide at the point of strand exchange. HJ branch migration catalyzed by RuvA-RuvB allows RuvC to scan DNA until it finds its consensus sequence, where it cleaves and resolves the cruciform DNA. This Wolbachia pipientis wMel protein is Crossover junction endodeoxyribonuclease RuvC.